Reading from the N-terminus, the 75-residue chain is CDC42 small effector protein 1 (75 aa).

2 S-palmitoyl cysteine lipidation sites follow: Cys-10 and Cys-11. A CRIB domain is found at 30–43 (IGEPTNFVHLTHIG). Positions 45-75 (GEMADGMQPSGPIKEQMRSKVPHANGRNSLL) are disordered.

The protein belongs to the CDC42SE/SPEC family.

The protein localises to the cytoplasm. It is found in the cytoskeleton. The protein resides in the cell membrane. Its function is as follows. Probably involved in the organization of the actin cytoskeleton by acting downstream of CDC42, inducing actin filament assembly. This is CDC42 small effector protein 1 (cdc42se1) from Danio rerio (Zebrafish).